Reading from the N-terminus, the 196-residue chain is uncharacterized protein (196 aa).

A helical transmembrane segment spans residues 22-42 (MIIIPMALLVFILIIGSFFAI).

The protein localises to the cell membrane. This is an uncharacterized protein from Lactobacillus acidophilus (strain ATCC 700396 / NCK56 / N2 / NCFM).